Here is a 236-residue protein sequence, read N- to C-terminus: MDLQNQMKKAVAQAAVDQIQNGMILGLGSGSTAALMIEALAIKIKSGEIKDVVGVTTSFQGEVLASELGIPLKSLSSVSEIDLAIDGADEVNPKFQLIKGGGACHVQEKLVAALAKKFIVVVDSTKLVEKLNLDFKLPVEVLPSAWKQVQKTLINLGGEGNLRMAQKKAGPIVTDQGNLILDLTFRNGIDKPELLESQINNIPGVLENGLFVNLTDEVLVGKVESDVVGVESLKKI.

Substrate is bound by residues 29–32, 86–89, and 99–102; these read SGST, DGAD, and KGGG. The Proton acceptor role is filled by Glu108. Lys126 is a binding site for substrate.

This sequence belongs to the ribose 5-phosphate isomerase family. In terms of assembly, homodimer.

It catalyses the reaction aldehydo-D-ribose 5-phosphate = D-ribulose 5-phosphate. The protein operates within carbohydrate degradation; pentose phosphate pathway; D-ribose 5-phosphate from D-ribulose 5-phosphate (non-oxidative stage): step 1/1. Catalyzes the reversible conversion of ribose-5-phosphate to ribulose 5-phosphate. In Prochlorococcus marinus (strain NATL2A), this protein is Ribose-5-phosphate isomerase A.